Reading from the N-terminus, the 80-residue chain is Conotoxin VnMSGL-0123 (80 aa).

An N-terminal signal peptide occupies residues 1-20 (MSGLGIMVLTLLLLVSMATS). A propeptide spanning residues 21–44 (HQDGGGKQATQRDAINVRRRRSIT) is cleaved from the precursor. Disulfide bonds link C53–C65, C57–C74, and C64–C78. A Phenylalanine amide modification is found at F79.

Belongs to the conotoxin O3 superfamily. In terms of tissue distribution, expressed by the venom duct.

Its subcellular location is the secreted. This chain is Conotoxin VnMSGL-0123, found in Conus ventricosus (Mediterranean cone).